Here is a 164-residue protein sequence, read N- to C-terminus: Mineralocorticoid receptor (164 aa).

In terms of domain architecture, NR LBD spans 1–162; that stretch reads QYSWMCLSSF…EFPRCWWRSS (162 aa). Residues Arg-15 and Thr-143 each contribute to the 21-hydroxyprogesterone site. Residues Arg-15 and Thr-143 each contribute to the aldosterone site. Positions 15 and 143 each coordinate progesterone.

This sequence belongs to the nuclear hormone receptor family. NR3 subfamily. In terms of assembly, heteromultimeric cytoplasmic complex with HSP90, HSP70, and FKBP4, in the absence of ligand. After ligand binding, it translocates to the nucleus and binds to DNA as a homodimer and as a heterodimer with NR3C1. Binds the coactivator NCOA2. May interact with HSD11B2 in the absence of ligand. Binds the coactivators NCOA1, TIF1 and NRIP1. Post-translationally, phosphorylated.

The protein resides in the cytoplasm. It localises to the nucleus. Its subcellular location is the endoplasmic reticulum membrane. In terms of biological role, receptor for both mineralocorticoids (MC) such as aldosterone and glucocorticoids (GC) such as corticosterone or cortisol. Binds to mineralocorticoid response elements (MRE) and transactivates target genes. The effect of MC is to increase ion and water transport and thus raise extracellular fluid volume and blood pressure and lower potassium levels. The sequence is that of Mineralocorticoid receptor (NR3C2) from Sus scrofa (Pig).